Reading from the N-terminus, the 30-residue chain is Trypsin inhibitor 2 (30 aa).

3 disulfide bridges follow: Cys-3/Cys-20, Cys-10/Cys-22, and Cys-16/Cys-29.

This sequence belongs to the protease inhibitor I7 (squash-type serine protease inhibitor) family.

It localises to the secreted. Inhibits trypsin. This chain is Trypsin inhibitor 2, found in Luffa aegyptiaca (Sponge gourd).